A 424-amino-acid polypeptide reads, in one-letter code: Tyrosine--tRNA ligase (424 aa).

Y37 is a binding site for L-tyrosine. The short motif at 42–51 is the 'HIGH' region element; it reads PTADSLHLGH. The L-tyrosine site is built by Y175 and Q179. The 'KMSKS' region motif lies at 235–239; sequence KFGKT. K238 lines the ATP pocket. The region spanning 357 to 414 is the S4 RNA-binding domain; that stretch reads ADLQQALVNAELVPSRGQARTMISSNAVAINGEKQSDPEYAFTDADRLFGRYTLLRRG.

The protein belongs to the class-I aminoacyl-tRNA synthetase family. TyrS type 1 subfamily. Homodimer.

Its subcellular location is the cytoplasm. The enzyme catalyses tRNA(Tyr) + L-tyrosine + ATP = L-tyrosyl-tRNA(Tyr) + AMP + diphosphate + H(+). Its function is as follows. Catalyzes the attachment of tyrosine to tRNA(Tyr) in a two-step reaction: tyrosine is first activated by ATP to form Tyr-AMP and then transferred to the acceptor end of tRNA(Tyr). The polypeptide is Tyrosine--tRNA ligase (Yersinia enterocolitica serotype O:8 / biotype 1B (strain NCTC 13174 / 8081)).